Here is a 131-residue protein sequence, read N- to C-terminus: 14.7 kDa heat shock protein (131 aa).

The segment covering 1–11 (MSRNMEVNAGS) has biased composition (polar residues). The tract at residues 1–20 (MSRNMEVNAGSSGEIPSPIR) is disordered. The 110-residue stretch at 22 to 131 (RFQKSGSQAV…INVKERILHY (110 aa)) folds into the sHSP domain.

This sequence belongs to the small heat shock protein (HSP20) family. May form oligomeric structures.

It localises to the cytoplasm. This chain is 14.7 kDa heat shock protein (HSP14.7), found in Arabidopsis thaliana (Mouse-ear cress).